The primary structure comprises 315 residues: Olfactory receptor 51L1 (315 aa).

Over 1-27 the chain is Extracellular; it reads MGDWNNSDAVEPIFILRGFPGLEYVHS. Asn5 is a glycosylation site (N-linked (GlcNAc...) asparagine). A helical membrane pass occupies residues 28–48; sequence WLSILFCLAYLVAFMGNVTIL. The Cytoplasmic segment spans residues 49–56; sequence SVIWIESS. The helical transmembrane segment at 57-77 threads the bilayer; it reads LHQPMYYFISILAVNDLGMSL. Residues 78-101 lie on the Extracellular side of the membrane; sequence STLPTMLAVLWLDAPEIQASACYA. An intrachain disulfide couples Cys99 to Cys191. A helical transmembrane segment spans residues 102 to 122; sequence QLFFIHTFTFLESSVLLAMAF. At 123–141 the chain is on the cytoplasmic side; it reads DRFVAICHPLHYPTILTNS. A helical transmembrane segment spans residues 142–162; the sequence is VIGKIGLACLLRSLGVVLPTP. The Extracellular segment spans residues 163–198; that stretch reads LLLRHYHYCHGNALSHAFCLHQDVLRLSCTDARTNS. The helical transmembrane segment at 199–219 threads the bilayer; sequence IYGLCVVIATLGVDSIFILLS. At 220 to 239 the chain is on the cytoplasmic side; that stretch reads YVLILNTVLDIASREEQLKA. Residues 240 to 260 form a helical membrane-spanning segment; that stretch reads LNTCVSHICVVLIFFVPVIGV. Topologically, residues 261-275 are extracellular; sequence SMVHRFGKHLSPIVH. A helical membrane pass occupies residues 276–296; it reads ILMADIYLLLPPVLNPIVYSV. The Cytoplasmic portion of the chain corresponds to 297–315; sequence RTKQIRLGILHKFVLRRRF.

This sequence belongs to the G-protein coupled receptor 1 family.

Its subcellular location is the cell membrane. Functionally, odorant receptor. The polypeptide is Olfactory receptor 51L1 (OR51L1) (Homo sapiens (Human)).